A 351-amino-acid polypeptide reads, in one-letter code: Probable E3 ubiquitin-protein ligase sinah (351 aa).

Positions 1–38 (MSVRNSRPQLSWPERVSPQRTIDTPTASGEMLTRRQSA) are disordered. Positions 18-27 (PQRTIDTPTA) are enriched in polar residues. An RING-type zinc finger spans residues 106–141 (CPVCFGYIMPPIMQCPRGHLICSTCRSKLTICPVCR). The segment at 155–346 (VASKLIFPCK…LALNVVIRKV (192 aa)) is SBD. An SIAH-type zinc finger spans residues 158 to 218 (KLIFPCKHSH…VYQHLMSSHE (61 aa)). Zn(2+)-binding residues include cysteine 163, cysteine 170, histidine 182, cysteine 186, cysteine 193, cysteine 200, histidine 212, and histidine 217.

This sequence belongs to the SINA (Seven in absentia) family. In terms of assembly, interacts with ebi and phyl.

The enzyme catalyses S-ubiquitinyl-[E2 ubiquitin-conjugating enzyme]-L-cysteine + [acceptor protein]-L-lysine = [E2 ubiquitin-conjugating enzyme]-L-cysteine + N(6)-ubiquitinyl-[acceptor protein]-L-lysine.. It functions in the pathway protein modification; protein ubiquitination. Its function is as follows. E3 ubiquitin-protein ligase that mediates ubiquitination and subsequent proteasomal degradation of target proteins. The adapter phyl is required to direct the degradation of the two isoforms of the transcriptional repressor Tramtrack (Ttk). E3 ubiquitin ligases accept ubiquitin from an E2 ubiquitin-conjugating enzyme in the form of a thioester and then directly transfers the ubiquitin to targeted substrates. It probably triggers the ubiquitin-mediated degradation of different substrates. A phyl-independent mechanism of degradation exists for isoform beta of ttk that involves motifs in the C-terminus of ttk. The sequence is that of Probable E3 ubiquitin-protein ligase sinah (sinah) from Drosophila melanogaster (Fruit fly).